The following is a 96-amino-acid chain: Co-chaperonin GroES (96 aa).

The protein belongs to the GroES chaperonin family. Heptamer of 7 subunits arranged in a ring. Interacts with the chaperonin GroEL.

The protein localises to the cytoplasm. In terms of biological role, together with the chaperonin GroEL, plays an essential role in assisting protein folding. The GroEL-GroES system forms a nano-cage that allows encapsulation of the non-native substrate proteins and provides a physical environment optimized to promote and accelerate protein folding. GroES binds to the apical surface of the GroEL ring, thereby capping the opening of the GroEL channel. The sequence is that of Co-chaperonin GroES from Vibrio campbellii (strain ATCC BAA-1116).